Consider the following 132-residue polypeptide: Small ribosomal subunit protein uS8c (132 aa).

It belongs to the universal ribosomal protein uS8 family. As to quaternary structure, part of the 30S ribosomal subunit.

It localises to the plastid. It is found in the chloroplast. Its function is as follows. One of the primary rRNA binding proteins, it binds directly to 16S rRNA central domain where it helps coordinate assembly of the platform of the 30S subunit. The chain is Small ribosomal subunit protein uS8c (rps8) from Ceratophyllum demersum (Rigid hornwort).